The following is a 635-amino-acid chain: Chaperone protein HtpG (635 aa).

The segment at 1–346 (MSQTTTNSAS…SADLPLNVSR (346 aa)) is a; substrate-binding. The b stretch occupies residues 347–563 (EILQESRDVR…QNELSPHLLR (217 aa)). A c region spans residues 564-635 (MLKAAGQEAP…KRLNGLLLKA (72 aa)).

It belongs to the heat shock protein 90 family. In terms of assembly, homodimer.

Its subcellular location is the cytoplasm. Molecular chaperone. Has ATPase activity. This chain is Chaperone protein HtpG, found in Bordetella parapertussis (strain 12822 / ATCC BAA-587 / NCTC 13253).